Reading from the N-terminus, the 232-residue chain is Putative N-acetylmannosamine-6-phosphate 2-epimerase (232 aa).

Belongs to the NanE family.

The enzyme catalyses an N-acyl-D-glucosamine 6-phosphate = an N-acyl-D-mannosamine 6-phosphate. The protein operates within amino-sugar metabolism; N-acetylneuraminate degradation; D-fructose 6-phosphate from N-acetylneuraminate: step 3/5. In terms of biological role, converts N-acetylmannosamine-6-phosphate (ManNAc-6-P) to N-acetylglucosamine-6-phosphate (GlcNAc-6-P). This is Putative N-acetylmannosamine-6-phosphate 2-epimerase from Borreliella burgdorferi (strain ZS7) (Borrelia burgdorferi).